The chain runs to 293 residues: 16S rRNA (guanine(1405)-N(7))-methyltransferase (293 aa).

S-adenosyl-L-methionine contacts are provided by residues Phe47, 80 to 82 (HAS), Arg86, Ala111, Asp134, 160 to 161 (DL), Leu176, and Gln185. A compositionally biased stretch (low complexity) spans 258 to 274 (GRPAPAEGAAEPGATRP). The segment at 258-293 (GRPAPAEGAAEPGATRPVVDVPATARPDADRVDPTG) is disordered. A compositionally biased stretch (basic and acidic residues) spans 284–293 (PDADRVDPTG).

The protein belongs to the methyltransferase superfamily. Aminoglycoside resistance family.

It catalyses the reaction guanosine(1405) in 16S rRNA + S-adenosyl-L-methionine = N(7)-methylguanosine(1405) in 16S rRNA + S-adenosyl-L-homocysteine. Its function is as follows. Specifically methylates the N(7) position of guanine 1405 in 16S rRNA. Confers resistance to aminoglycosides. This chain is 16S rRNA (guanine(1405)-N(7))-methyltransferase (fmrO), found in Micromonospora olivasterospora.